The primary structure comprises 487 residues: Glutamyl-tRNA(Gln) amidotransferase subunit A (487 aa).

Active-site charge relay system residues include Lys79 and Ser154. Ser178 functions as the Acyl-ester intermediate in the catalytic mechanism.

It belongs to the amidase family. GatA subfamily. In terms of assembly, heterotrimer of A, B and C subunits.

The enzyme catalyses L-glutamyl-tRNA(Gln) + L-glutamine + ATP + H2O = L-glutaminyl-tRNA(Gln) + L-glutamate + ADP + phosphate + H(+). Allows the formation of correctly charged Gln-tRNA(Gln) through the transamidation of misacylated Glu-tRNA(Gln) in organisms which lack glutaminyl-tRNA synthetase. The reaction takes place in the presence of glutamine and ATP through an activated gamma-phospho-Glu-tRNA(Gln). The sequence is that of Glutamyl-tRNA(Gln) amidotransferase subunit A from Roseiflexus sp. (strain RS-1).